The sequence spans 61 residues: Short neurotoxin 1 (61 aa).

Polar residues predominate over residues 1–16 (MECHNQQSSQPPTTKT). The interval 1–20 (MECHNQQSSQPPTTKTCPGE) is disordered. Cystine bridges form between C3–C23, C17–C40, C42–C53, and C54–C59.

The protein belongs to the three-finger toxin family. Short-chain subfamily. Type I alpha-neurotoxin sub-subfamily. Expressed by the venom gland.

It is found in the secreted. Its function is as follows. Binds to muscle nicotinic acetylcholine receptor (nAChR) and inhibit acetylcholine from binding to the receptor, thereby impairing neuromuscular transmission. The sequence is that of Short neurotoxin 1 from Naja melanoleuca (Forest cobra).